The primary structure comprises 417 residues: uncharacterized protein (417 aa).

Residues 1 to 24 (MSQPPINPLGQPQVPAAASPSGQP) form a disordered region. 4 helical membrane passes run 54 to 74 (VYDTGIIALAAIAILSILLTA), 79 to 99 (LMLYALAPALALGALGVTLLI), 117 to 137 (AIVVPIIVLAIAAGLIAGAFV), and 143 to 163 (MLVFANPMFVMGLITVGLYFM). The segment covering 211–228 (DLSASARMEEHEASQRQD) has biased composition (basic and acidic residues). Disordered stretches follow at residues 211 to 283 (DLSA…FKDD) and 308 to 417 (IMPA…RKNK). Residues 312–322 (SSRSPNFSTGT) are compositionally biased toward polar residues. Residues 336-347 (EPSIPRVSSSSR) are compositionally biased toward low complexity. The segment covering 391–401 (STANLSPSNPF) has biased composition (polar residues).

The protein belongs to the chlamydial CPn_0443/CT_005/TC_0273 family.

It localises to the cell membrane. This is an uncharacterized protein from Chlamydia pneumoniae (Chlamydophila pneumoniae).